The chain runs to 83 residues: Hainantoxin-III 6 (83 aa).

An N-terminal signal peptide occupies residues 1–21; the sequence is MKASMFLALAGLVLLFVVGYA. Residues 22–48 constitute a propeptide that is removed on maturation; it reads SESEEKESPRELLSKIFAVDDFKGEER. Cystine bridges form between cysteine 50–cysteine 65, cysteine 57–cysteine 70, and cysteine 64–cysteine 77. At leucine 81 the chain carries Leucine amide.

It belongs to the neurotoxin 10 (Hwtx-1) family. 15 (Hntx-3) subfamily. Monomer. As to expression, expressed by the venom gland.

The protein localises to the secreted. Its function is as follows. Selective antagonist of neuronal tetrodotoxin (TTX)-sensitive voltage-gated sodium channels (IC(50)=1270 nM on Nav1.1/SCN1A, 270 nM on Nav1.2/SCN2A, 491 nM on Nav1.3/SCN3A and 232 nM on Nav1.7/SCN9A). This toxin suppress Nav1.7 current amplitude without significantly altering the activation, inactivation, and repriming kinetics. Short extreme depolarizations partially activate the toxin-bound channel, indicating voltage-dependent inhibition of this toxin. This toxin increases the deactivation of the Nav1.7 current after extreme depolarizations. The toxin-Nav1.7 complex is gradually dissociated upon prolonged strong depolarizations in a voltage-dependent manner, and the unbound toxin rebinds to Nav1.7 after a long repolarization. Moreover, analysis of chimeric channels showed that the DIIS3-S4 linker is critical for toxin binding to Nav1.7. These data are consistent with this toxin interacting with Nav1.7 site 4 and trapping the domain II voltage sensor in the closed state. The polypeptide is Hainantoxin-III 6 (Cyriopagopus hainanus (Chinese bird spider)).